Reading from the N-terminus, the 199-residue chain is SCO2-like protein RBE_0029 (199 aa).

It belongs to the SCO1/2 family.

In Rickettsia bellii (strain RML369-C), this protein is SCO2-like protein RBE_0029.